The primary structure comprises 346 residues: Heterogeneous nuclear ribonucleoprotein A2 homolog 1 (346 aa).

2 consecutive RRM domains span residues 9 to 92 (RKLF…ESAK) and 100 to 179 (KKLF…LSKQ). 2 disordered regions span residues 182 to 217 (QDVQNTRNNRGGNFGFGDSRGGGNFGSGPGGNFRGG) and 326 to 346 (NYGPGNASGGNGGGYGGRNRY). Residues 193-217 (GNFGFGDSRGGGNFGSGPGGNFRGG) are compositionally biased toward gly residues. Residues 297–340 (QQSSNYGPMKSGGNFGGNRSMGGGPYGGGNYGPGNASGGNGGGY) form a nuclear targeting sequence region.

It is found in the nucleus. Its function is as follows. Forms complexes (ribonucleosomes) with at least 20 other different hnRNP and heterogeneous nuclear RNA in the nucleus. In Xenopus laevis (African clawed frog), this protein is Heterogeneous nuclear ribonucleoprotein A2 homolog 1.